Here is a 254-residue protein sequence, read N- to C-terminus: Large ribosomal subunit protein uL15m (254 aa).

The transit peptide at Met1–Ile78 directs the protein to the mitochondrion. The disordered stretch occupies residues Asn44–Lys104. Over residues Gly64–Lys79 the composition is skewed to basic residues.

Belongs to the universal ribosomal protein uL15 family. As to quaternary structure, component of the mitochondrial large ribosomal subunit (mt-LSU). Mature yeast 74S mitochondrial ribosomes consist of a small (37S) and a large (54S) subunit. The 37S small subunit contains a 15S ribosomal RNA (15S mt-rRNA) and at least 32 different proteins. The 54S large subunit contains a 21S rRNA (21S mt-rRNA) and at least 45 different proteins.

It is found in the mitochondrion. In terms of biological role, component of the mitochondrial ribosome (mitoribosome), a dedicated translation machinery responsible for the synthesis of mitochondrial genome-encoded proteins, including at least some of the essential transmembrane subunits of the mitochondrial respiratory chain. The mitoribosomes are attached to the mitochondrial inner membrane and translation products are cotranslationally integrated into the membrane. This Schizosaccharomyces pombe (strain 972 / ATCC 24843) (Fission yeast) protein is Large ribosomal subunit protein uL15m (mrpl10).